Reading from the N-terminus, the 599-residue chain is Sulfite reductase [NADPH] flavoprotein alpha-component (599 aa).

Positions V64–V202 constitute a Flavodoxin-like domain. FMN-binding positions include S70–A75, S117–G120, and L153–C162. Residues D234–P448 enclose the FAD-binding FR-type domain. FAD contacts are provided by residues T322, A356, R386–S389, T404–G406, Y410, and G419–S422. Residues S519–R520, K525–Q529, and D561 each bind NADP(+). Residue Y599 coordinates FAD.

Belongs to the NADPH-dependent sulphite reductase flavoprotein subunit CysJ family. It in the N-terminal section; belongs to the flavodoxin family. This sequence in the C-terminal section; belongs to the flavoprotein pyridine nucleotide cytochrome reductase family. In terms of assembly, alpha(8)-beta(8). The alpha component is a flavoprotein, the beta component is a hemoprotein. It depends on FAD as a cofactor. FMN is required as a cofactor.

The catalysed reaction is hydrogen sulfide + 3 NADP(+) + 3 H2O = sulfite + 3 NADPH + 4 H(+). It functions in the pathway sulfur metabolism; hydrogen sulfide biosynthesis; hydrogen sulfide from sulfite (NADPH route): step 1/1. Component of the sulfite reductase complex that catalyzes the 6-electron reduction of sulfite to sulfide. This is one of several activities required for the biosynthesis of L-cysteine from sulfate. The flavoprotein component catalyzes the electron flow from NADPH -&gt; FAD -&gt; FMN to the hemoprotein component. In Salmonella typhimurium (strain LT2 / SGSC1412 / ATCC 700720), this protein is Sulfite reductase [NADPH] flavoprotein alpha-component.